Reading from the N-terminus, the 240-residue chain is Caffeoyl-CoA O-methyltransferase 5 (240 aa).

A substrate-binding site is contributed by Lys14. Residues Thr56, Glu78, 80–81 (GV), Ser86, Asp104, and Ala133 contribute to the S-adenosyl-L-methionine site. Asp156 is a binding site for substrate. Asp156 is an a divalent metal cation binding site. Asp158 contributes to the S-adenosyl-L-methionine binding site. The a divalent metal cation site is built by Asp182 and Asn183. Asn187 provides a ligand contact to substrate.

The protein belongs to the class I-like SAM-binding methyltransferase superfamily. Cation-dependent O-methyltransferase family. CCoAMT subfamily. Mg(2+) serves as cofactor. As to expression, expression steadily increases from the bottom to the top of the plant.

The catalysed reaction is (E)-caffeoyl-CoA + S-adenosyl-L-methionine = (E)-feruloyl-CoA + S-adenosyl-L-homocysteine + H(+). It participates in aromatic compound metabolism; phenylpropanoid biosynthesis. Methylates caffeoyl-CoA to feruloyl-CoA and 5-hydroxyferuloyl-CoA to sinapoyl-CoA. Plays a role in the synthesis of feruloylated polysaccharides. Involved in the reinforcement of the plant cell wall. Also involved in the responding to wounding or pathogen challenge by the increased formation of cell wall-bound ferulic acid polymers. Methylates 5-hydroxyferulolyl-CoA more efficiently than caffeoyl-CoA. The protein is Caffeoyl-CoA O-methyltransferase 5 (CCOAOMT5) of Nicotiana tabacum (Common tobacco).